The primary structure comprises 405 residues: NAC transcription factor NAM-A1 (405 aa).

Low complexity predominate over residues 1–10; it reads MGSSDSSSGS. A disordered region spans residues 1-38; sequence MGSSDSSSGSAQKAARHQHEPPPPRQRGSAPELPPGFR. In terms of domain architecture, NAC spans 33-204; sequence LPPGFRFHPT…DWVLCRIYKK (172 aa). A DNA-binding region spans residues 137-210; the sequence is LGVKKALVFY…IYKKINKAAA (74 aa).

As to expression, expressed in flag leaves, green spikes and peduncles.

The protein localises to the nucleus. Functionally, transcription factor of the NAC family associated with the grain protein content (GPC). Accelerates senescence and increases nutrient remobilization from leaves to developing grains. The tetraploid cultivated wheat (T.durum) contains one additional gene coding for a functional protein (NAM-B2) and one extra pseudogene (NAM-B1). This Triticum turgidum subsp. durum (Durum wheat) protein is NAC transcription factor NAM-A1 (NAM-A1).